The chain runs to 181 residues: Malignant T-cell-amplified sequence 2 (181 aa).

A PUA domain is found at 92–171; sequence LPHQQVDKGA…IGIENIHYLN (80 aa).

Belongs to the MCTS1 family.

It is found in the cytoplasm. In Homo sapiens (Human), this protein is Malignant T-cell-amplified sequence 2.